Here is a 132-residue protein sequence, read N- to C-terminus: Translation initiation factor 5A (132 aa).

Hypusine is present on K36.

Belongs to the eIF-5A family.

Its subcellular location is the cytoplasm. Its function is as follows. Functions by promoting the formation of the first peptide bond. In Thermofilum pendens (strain DSM 2475 / Hrk 5), this protein is Translation initiation factor 5A (eIF5A).